Here is a 251-residue protein sequence, read N- to C-terminus: uncharacterized protein (251 aa).

4 disordered regions span residues 1 to 93 (MQPG…ASPG), 107 to 152 (GLRS…SRPQ), 169 to 188 (PSSILSAASPGAKLPRVSLS), and 224 to 251 (LQAQNLPSSGPLQARPRPRPHSGLSTPS). Positions 225–234 (QAQNLPSSGP) are enriched in polar residues.

This is an uncharacterized protein from Homo sapiens (Human).